The primary structure comprises 147 residues: Protein-export protein SecB (147 aa).

It belongs to the SecB family. As to quaternary structure, homotetramer, a dimer of dimers. One homotetramer interacts with 1 SecA dimer.

It localises to the cytoplasm. Functionally, one of the proteins required for the normal export of preproteins out of the cell cytoplasm. It is a molecular chaperone that binds to a subset of precursor proteins, maintaining them in a translocation-competent state. It also specifically binds to its receptor SecA. This is Protein-export protein SecB from Neisseria meningitidis serogroup C (strain 053442).